Reading from the N-terminus, the 219-residue chain is Elongation factor Ts (219 aa).

Positions 82-85 are involved in Mg(2+) ion dislocation from EF-Tu; that stretch reads TDFV.

The protein belongs to the EF-Ts family.

It localises to the cytoplasm. Associates with the EF-Tu.GDP complex and induces the exchange of GDP to GTP. It remains bound to the aminoacyl-tRNA.EF-Tu.GTP complex up to the GTP hydrolysis stage on the ribosome. The chain is Elongation factor Ts from Trichodesmium erythraeum (strain IMS101).